Consider the following 96-residue polypeptide: Large ribosomal subunit protein bL27 (96 aa).

Residues 1 to 9 (MLNMNLQLL) constitute a propeptide that is removed on maturation.

Belongs to the bacterial ribosomal protein bL27 family. In terms of processing, the N-terminus is cleaved by ribosomal processing cysteine protease Prp.

This chain is Large ribosomal subunit protein bL27, found in Clostridioides difficile (strain 630) (Peptoclostridium difficile).